A 106-amino-acid polypeptide reads, in one-letter code: ATP-dependent Clp protease adapter protein ClpS (106 aa).

The segment at 1–22 is disordered; that stretch reads MTDEPNQDDPQGPEVEAAKPSL.

It belongs to the ClpS family. In terms of assembly, binds to the N-terminal domain of the chaperone ClpA.

In terms of biological role, involved in the modulation of the specificity of the ClpAP-mediated ATP-dependent protein degradation. This Halorhodospira halophila (strain DSM 244 / SL1) (Ectothiorhodospira halophila (strain DSM 244 / SL1)) protein is ATP-dependent Clp protease adapter protein ClpS.